A 455-amino-acid polypeptide reads, in one-letter code: uncharacterized protein (455 aa).

Residues 1 to 24 (MKTTKILLHTGVLALSLLATQVMA) form the signal peptide.

This is an uncharacterized protein from Pseudomonas aeruginosa (strain ATCC 15692 / DSM 22644 / CIP 104116 / JCM 14847 / LMG 12228 / 1C / PRS 101 / PAO1).